A 366-amino-acid polypeptide reads, in one-letter code: Ribosomal RNA large subunit methyltransferase M (366 aa).

S-adenosyl-L-methionine-binding positions include serine 188, 221–224, aspartate 240, aspartate 260, and aspartate 277; that span reads CPGG. Residue lysine 306 is the Proton acceptor of the active site.

This sequence belongs to the class I-like SAM-binding methyltransferase superfamily. RNA methyltransferase RlmE family. RlmM subfamily. Monomer.

It is found in the cytoplasm. The enzyme catalyses cytidine(2498) in 23S rRNA + S-adenosyl-L-methionine = 2'-O-methylcytidine(2498) in 23S rRNA + S-adenosyl-L-homocysteine + H(+). Catalyzes the 2'-O-methylation at nucleotide C2498 in 23S rRNA. In Salmonella dublin (strain CT_02021853), this protein is Ribosomal RNA large subunit methyltransferase M.